Here is a 304-residue protein sequence, read N- to C-terminus: Arginine-binding protein ArgT (304 aa).

A signal peptide spans 1–26 (MRFPKIPKRAVAATVGIVATSFTLAS). Residue Cys-27 is the site of N-palmitoyl cysteine attachment. Residue Cys-27 is the site of S-diacylglycerol cysteine attachment.

Belongs to the bacterial solute-binding protein 3 family. In terms of assembly, the complex is probably composed of two ATP-binding proteins (ArgV), two transmembrane proteins (ArgU) and a solute-binding protein (ArgT).

The protein localises to the cell membrane. Functionally, part of the ABC transporter complex ArgTUV involved in L-arginine import. May also transport L-citrulline. Binds L-arginine and its molecular precursor L-citrulline, but not L-histidine, L-glutamate, L-glutamine, L-lysine or L-cysteine. The chain is Arginine-binding protein ArgT from Corynebacterium glutamicum (strain ATCC 13032 / DSM 20300 / JCM 1318 / BCRC 11384 / CCUG 27702 / LMG 3730 / NBRC 12168 / NCIMB 10025 / NRRL B-2784 / 534).